We begin with the raw amino-acid sequence, 410 residues long: Phosphoglycerate kinase (410 aa).

Residues 19 to 21 (DLN), Arg34, 57 to 60 (HQGK), Arg114, and Arg154 each bind substrate. Residues Glu332 and 358–361 (GGHS) each bind ATP.

The protein belongs to the phosphoglycerate kinase family. Homodimer.

The protein localises to the cytoplasm. It catalyses the reaction (2R)-3-phosphoglycerate + ATP = (2R)-3-phospho-glyceroyl phosphate + ADP. The protein operates within carbohydrate degradation; glycolysis; pyruvate from D-glyceraldehyde 3-phosphate: step 2/5. This Pyrococcus horikoshii (strain ATCC 700860 / DSM 12428 / JCM 9974 / NBRC 100139 / OT-3) protein is Phosphoglycerate kinase (pgk).